A 224-amino-acid chain; its full sequence is Phosphoribosylformylglycinamidine synthase subunit PurQ (224 aa).

A Glutamine amidotransferase type-1 domain is found at 4–224 (RIGVVTFPGT…YSALDAVLTG (221 aa)). The active-site Nucleophile is cysteine 87. Residues histidine 195 and glutamate 197 contribute to the active site.

Part of the FGAM synthase complex composed of 1 PurL, 1 PurQ and 2 PurS subunits.

It is found in the cytoplasm. The catalysed reaction is N(2)-formyl-N(1)-(5-phospho-beta-D-ribosyl)glycinamide + L-glutamine + ATP + H2O = 2-formamido-N(1)-(5-O-phospho-beta-D-ribosyl)acetamidine + L-glutamate + ADP + phosphate + H(+). It catalyses the reaction L-glutamine + H2O = L-glutamate + NH4(+). It functions in the pathway purine metabolism; IMP biosynthesis via de novo pathway; 5-amino-1-(5-phospho-D-ribosyl)imidazole from N(2)-formyl-N(1)-(5-phospho-D-ribosyl)glycinamide: step 1/2. Part of the phosphoribosylformylglycinamidine synthase complex involved in the purines biosynthetic pathway. Catalyzes the ATP-dependent conversion of formylglycinamide ribonucleotide (FGAR) and glutamine to yield formylglycinamidine ribonucleotide (FGAM) and glutamate. The FGAM synthase complex is composed of three subunits. PurQ produces an ammonia molecule by converting glutamine to glutamate. PurL transfers the ammonia molecule to FGAR to form FGAM in an ATP-dependent manner. PurS interacts with PurQ and PurL and is thought to assist in the transfer of the ammonia molecule from PurQ to PurL. The sequence is that of Phosphoribosylformylglycinamidine synthase subunit PurQ from Mycobacterium bovis (strain ATCC BAA-935 / AF2122/97).